Here is a 585-residue protein sequence, read N- to C-terminus: RNA polymerase sigma factor RpoD (585 aa).

The tract at residues 67-93 is disordered; the sequence is PASTLVPKDDSKPARKKKESSASTSGS. The tract at residues 351–421 is sigma-70 factor domain-2; it reads LVKANLRLVV…TRAISDQART (71 aa). The short motif at 375-378 is the Interaction with polymerase core subunit RpoC element; sequence DLIQ. The tract at residues 430–506 is sigma-70 factor domain-3; that stretch reads EQVNKVIRET…DTEVETPVNA (77 aa). Residues 519 to 572 form a sigma-70 factor domain-4 region; that stretch reads VLHTLPAREQKVIRMRFGLDDGYPQTLEEVGYQFKVTRERIRQIEAKALRRLRH. A DNA-binding region (H-T-H motif) is located at residues 545 to 564; sequence LEEVGYQFKVTRERIRQIEA.

Belongs to the sigma-70 factor family. RpoD/SigA subfamily. As to quaternary structure, interacts transiently with the RNA polymerase catalytic core.

It is found in the cytoplasm. Its function is as follows. Sigma factors are initiation factors that promote the attachment of RNA polymerase to specific initiation sites and are then released. This sigma factor is the primary sigma factor during exponential growth. This is RNA polymerase sigma factor RpoD from Leptospira interrogans serogroup Icterohaemorrhagiae serovar copenhageni (strain Fiocruz L1-130).